The sequence spans 445 residues: MNSVGVVKPQTLHFAEPLTLECNRTLPSFELIIETYGTLNSDKSNAVLICHALSGSHHAAGFHSDNDKKAGWWDNMIGPNKSIDTNRFFVVCVNNIGSCFGSTGPTSINPESSKAQVYGPDFPLVTIKDWVKTQAMLSDRLEIDVWHAVVGGSMGGMQALQWAADYPSRLKRCVVIASTPKLSAQNIAFNEVARQSILSDPDFKNGRYLQAGTYPRRGLILARMVGHITYLTDDAMKAKFGRDLKSGKFMYGYDVEFQVESYLRYQGERFSENFDANTYLLMTKALDYFDPTRDYPLTQSAQPIDSLVPEELLASSLVESVKADSSEDELAKTLADSADIDNISASNHQELTALKAAFAHTECQYLIVSFTTDWRFAPERSQEIVDALMATGKPVSYINVDAPHGHDSFLFDIPRYMGAVKGFLNAPFMTDNQSKNSQQKLGARS.

The 367-residue stretch at 45-411 (NAVLICHALS…APHGHDSFLF (367 aa)) folds into the AB hydrolase-1 domain. Catalysis depends on serine 153, which acts as the Nucleophile. Arginine 223 provides a ligand contact to substrate. Active-site residues include aspartate 373 and histidine 406. Substrate is bound at residue aspartate 407.

This sequence belongs to the AB hydrolase superfamily. MetX family. As to quaternary structure, homodimer.

It localises to the cytoplasm. It catalyses the reaction L-homoserine + succinyl-CoA = O-succinyl-L-homoserine + CoA. It functions in the pathway amino-acid biosynthesis; L-methionine biosynthesis via de novo pathway; O-succinyl-L-homoserine from L-homoserine: step 1/1. In terms of biological role, transfers a succinyl group from succinyl-CoA to L-homoserine, forming succinyl-L-homoserine. The protein is Homoserine O-succinyltransferase of Psychrobacter arcticus (strain DSM 17307 / VKM B-2377 / 273-4).